We begin with the raw amino-acid sequence, 204 residues long: Proteasome subunit beta type-3 (204 aa).

It belongs to the peptidase T1B family. The 26S proteasome consists of a 20S proteasome core and two 19S regulatory subunits. The 20S proteasome core is composed of 28 subunits that are arranged in four stacked rings, resulting in a barrel-shaped structure. The two end rings are each formed by seven alpha subunits, and the two central rings are each formed by seven beta subunits. The catalytic chamber with the active sites is on the inside of the barrel.

The protein resides in the cytoplasm. It is found in the nucleus. Non-catalytic component of the proteasome, a multicatalytic proteinase complex which is characterized by its ability to cleave peptides with Arg, Phe, Tyr, Leu, and Glu adjacent to the leaving group at neutral or slightly basic pH. The proteasome has an ATP-dependent proteolytic activity. This chain is Proteasome subunit beta type-3 (PBC1), found in Oryza sativa subsp. japonica (Rice).